The sequence spans 371 residues: Cathepsin W (371 aa).

The N-terminal stretch at 1–21 (MTLTAHLSYFLVLLLAGQGLS) is a signal peptide. Residues 22–125 (DSLLTKDAGP…KVESNTWGES (104 aa)) constitute a propeptide that is removed on maturation. Residues asparagine 48 and asparagine 112 are each glycosylated (N-linked (GlcNAc...) asparagine). 3 disulfide bridges follow: cysteine 148-cysteine 189, cysteine 182-cysteine 224, and cysteine 282-cysteine 347. Cysteine 151 is an active-site residue. N-linked (GlcNAc...) asparagine glycosylation is present at asparagine 203. Active-site residues include histidine 289 and asparagine 326. The N-linked (GlcNAc...) asparagine glycan is linked to asparagine 344.

Belongs to the peptidase C1 family.

The protein localises to the endoplasmic reticulum. Functionally, may have a specific function in the mechanism or regulation of T-cell cytolytic activity. The polypeptide is Cathepsin W (Ctsw) (Mus musculus (Mouse)).